A 467-amino-acid chain; its full sequence is MFFKEIVMNAVNASFTDYKVADISLADYGRKEIKLAEAEMPALIGLRKRYAAEKPLAGAKILGCIHMTIQTAVLIETLVELGAEVRWTSCNIFSTQDHAAAAIAASGVPVFAWKGETEEEYNWCLEQQINVNGKPWDANMILDDGGDLTALVHEKYPTLLDHIHGITEETTTGVQRLLEMWKDGSLKVPAINVNDSVTKSKNDNKYGCRHSLNDAIKRATDMLLSGRRALVIGYGDVGKGSAQSLRQEGMIVRVTEVDPICAMQACMDGYEVVSPYKNGVQTGKKEDINLDLLKNTDLIVTTTGNYHVCDSAMLDTLKAGAVVCNIGHFDTEIDTNYLRGYKWVEVKPQVHQVYRSENENDYLILLSEGRLVNLGNATGHPSRVMDGSFANQVLGQIHLFQEKFADLPASEKAAQIRVEVLPKKLDEEVAAAMVLGFGGVLTQLTSVQADYLGVPVEGPFKSDAYKY.

Residues Thr-68, Asp-144, and Glu-169 each contribute to the substrate site. An NAD(+)-binding site is contributed by 170–172 (TTT). Substrate-binding residues include Lys-199 and Asp-203. Residues Asn-204, 233–238 (GYGDVG), Glu-256, Asn-305, 326–328 (IGH), and Asn-373 contribute to the NAD(+) site.

It belongs to the adenosylhomocysteinase family. NAD(+) serves as cofactor.

It is found in the cytoplasm. The enzyme catalyses S-adenosyl-L-homocysteine + H2O = L-homocysteine + adenosine. It participates in amino-acid biosynthesis; L-homocysteine biosynthesis; L-homocysteine from S-adenosyl-L-homocysteine: step 1/1. Functionally, may play a key role in the regulation of the intracellular concentration of adenosylhomocysteine. This is Adenosylhomocysteinase from Acinetobacter baylyi (strain ATCC 33305 / BD413 / ADP1).